Reading from the N-terminus, the 197-residue chain is Shikimate kinase (197 aa).

An ATP-binding site is contributed by Gly-14–Thr-19. Mg(2+) is bound at residue Ser-18. Positions 36, 60, and 82 each coordinate substrate. Arg-120 lines the ATP pocket. Arg-147 is a binding site for substrate.

Belongs to the shikimate kinase family. In terms of assembly, monomer. Requires Mg(2+) as cofactor.

It localises to the cytoplasm. The catalysed reaction is shikimate + ATP = 3-phosphoshikimate + ADP + H(+). It functions in the pathway metabolic intermediate biosynthesis; chorismate biosynthesis; chorismate from D-erythrose 4-phosphate and phosphoenolpyruvate: step 5/7. Catalyzes the specific phosphorylation of the 3-hydroxyl group of shikimic acid using ATP as a cosubstrate. The polypeptide is Shikimate kinase (Prosthecochloris aestuarii (strain DSM 271 / SK 413)).